A 395-amino-acid chain; its full sequence is [LysW]-aminoadipate semialdehyde transaminase (395 aa).

Pyridoxal 5'-phosphate contacts are provided by residues 113–114 (GT) and Phe140. Substrate is bound at residue Arg143. 225 to 228 (DEIQ) is a pyridoxal 5'-phosphate binding site. Lys254 is modified (N6-(pyridoxal phosphate)lysine). Position 282 (Thr282) interacts with substrate. Thr283 serves as a coordination point for pyridoxal 5'-phosphate.

It belongs to the class-III pyridoxal-phosphate-dependent aminotransferase family. LysJ subfamily. As to quaternary structure, homodimer. Pyridoxal 5'-phosphate serves as cofactor.

The protein localises to the cytoplasm. The catalysed reaction is [amino-group carrier protein]-C-terminal-gamma-(L-lysyl)-L-glutamate + 2-oxoglutarate = [amino-group carrier protein]-C-terminal-N-(1-carboxy-5-oxopentan-1-yl)-L-glutamine + L-glutamate. The protein operates within amino-acid biosynthesis; L-lysine biosynthesis via AAA pathway; L-lysine from L-alpha-aminoadipate (Thermus route): step 4/5. Catalyzes the transfer of the amino group of L-glutamate to [LysW]-aminoadipate 6-semialdehyde, generating [LysW]-gamma-L-lysine. This is [LysW]-aminoadipate semialdehyde transaminase from Thermus thermophilus (strain ATCC 27634 / DSM 579 / HB8).